The chain runs to 429 residues: Ribosomal protein uS12 methylthiotransferase RimO (429 aa).

The region spanning 2 to 118 (HNIFLLSLGC…VLRAIGAEYR (117 aa)) is the MTTase N-terminal domain. Residues cysteine 11, cysteine 47, cysteine 81, cysteine 142, cysteine 146, and cysteine 149 each coordinate [4Fe-4S] cluster. The Radical SAM core domain occupies 128–357 (LTPPHYAFLK…MELQETISQE (230 aa)). The 68-residue stretch at 360–427 (REFEGNEIVV…PYDLEGEVIG (68 aa)) folds into the TRAM domain.

The protein belongs to the methylthiotransferase family. RimO subfamily. It depends on [4Fe-4S] cluster as a cofactor.

It localises to the cytoplasm. It catalyses the reaction L-aspartate(89)-[ribosomal protein uS12]-hydrogen + (sulfur carrier)-SH + AH2 + 2 S-adenosyl-L-methionine = 3-methylsulfanyl-L-aspartate(89)-[ribosomal protein uS12]-hydrogen + (sulfur carrier)-H + 5'-deoxyadenosine + L-methionine + A + S-adenosyl-L-homocysteine + 2 H(+). Its function is as follows. Catalyzes the methylthiolation of an aspartic acid residue of ribosomal protein uS12. This is Ribosomal protein uS12 methylthiotransferase RimO from Chlorobium limicola (strain DSM 245 / NBRC 103803 / 6330).